Reading from the N-terminus, the 294-residue chain is tRNA dimethylallyltransferase (294 aa).

10 to 17 (GPTAVGKT) contacts ATP. Position 12 to 17 (12 to 17 (TAVGKT)) interacts with substrate. An interaction with substrate tRNA region spans residues 35–38 (DSQQ).

Belongs to the IPP transferase family. Monomer. It depends on Mg(2+) as a cofactor.

The enzyme catalyses adenosine(37) in tRNA + dimethylallyl diphosphate = N(6)-dimethylallyladenosine(37) in tRNA + diphosphate. Functionally, catalyzes the transfer of a dimethylallyl group onto the adenine at position 37 in tRNAs that read codons beginning with uridine, leading to the formation of N6-(dimethylallyl)adenosine (i(6)A). This Streptococcus suis (strain 05ZYH33) protein is tRNA dimethylallyltransferase.